Here is a 100-residue protein sequence, read N- to C-terminus: Nucleoid-associated protein MYPU_0500 (100 aa).

The protein belongs to the YbaB/EbfC family. As to quaternary structure, homodimer.

Its subcellular location is the cytoplasm. It localises to the nucleoid. Its function is as follows. Binds to DNA and alters its conformation. May be involved in regulation of gene expression, nucleoid organization and DNA protection. This is Nucleoid-associated protein MYPU_0500 from Mycoplasmopsis pulmonis (strain UAB CTIP) (Mycoplasma pulmonis).